Reading from the N-terminus, the 855-residue chain is Pre-mRNA-splicing factor SYF1 (855 aa).

HAT repeat units follow at residues 15-47, 48-80, 90-122, 124-158, 160-192, 198-230, 235-268, 270-305, and 369-407; these read LVFE…FKQG, APKP…ARRA, PAYE…FLMD, GRVT…FLRS, PLPE…SSDR, QRLA…LISQ, VQSL…YYIR, GHFE…FEES, and GRPR…FYED. Position 420 is an N6-acetyllysine (Lys-420). HAT repeat units lie at residues 498–530, 532–566, 571–605, 643–677, and 679–713; these read GTFQ…FLEE, KYFE…KFIS, RKLE…LEEE, YGVT…MECK, and GEID…FEVR. The interval 808–855 is disordered; sequence AELAQQANPEEIQLGEDEDEDEMDLEPNEVRLEQQSVPAAVFGSLKED. Residues 820–834 are compositionally biased toward acidic residues; the sequence is QLGEDEDEDEMDLEP. Position 851 is a phosphoserine (Ser-851).

It belongs to the crooked-neck family. In terms of assembly, associates with RNA polymerase II, the TCR-specific proteins CKN1/CSA and ERCC6/CSB, and XPA. Identified in the spliceosome C complex. Component of the XAB2 complex, a multimeric protein complex composed of XAB2, PRPF19, AQR, ZNF830, ISY1, and PPIE. Identified in a pentameric intron-binding (IB) complex composed of AQR, XAB2, ISY1, ZNF830 and PPIE that is incorporated into the spliceosome as a preassembled complex. The IB complex does not contain PRPF19.

Its subcellular location is the nucleus. In terms of biological role, involved in pre-mRNA splicing as component of the spliceosome. Involved in transcription-coupled repair (TCR), transcription and pre-mRNA splicing. The polypeptide is Pre-mRNA-splicing factor SYF1 (Xab2) (Mus musculus (Mouse)).